A 145-amino-acid chain; its full sequence is Neutral phospholipase A2 homolog taipoxin beta chain 1 (145 aa).

The first 27 residues, 1 to 27, serve as a signal peptide directing secretion; that stretch reads MHPAHLLVLLAVCVSLLGASDIPPLPL. Disulfide bonds link Cys-38–Cys-98, Cys-54–Cys-144, Cys-56–Cys-72, Cys-71–Cys-125, Cys-78–Cys-118, Cys-87–Cys-111, and Cys-105–Cys-116.

The protein belongs to the phospholipase A2 family. Group I subfamily. D49 sub-subfamily. Heterotrimer of alpha, beta, and gamma chains; non-covalently linked. As to expression, expressed by the venom gland.

It localises to the secreted. Its function is as follows. Heterotrimer: Snake venom phospholipase A2 (PLA2) heterotrimer that acts as a potent presynaptic neurotoxin by blocking synaptic transmission and synaptic vesicle recycling. May act by binding in a calcium-dependent fashion to neurotonal pentraxin-1 (NPTX1) and neurotonal pentraxin-2 (NPTX2), but not to neuronal pentraxin receptor (NPTXR). Also binds to taipoxin-associated calcium binding protein 49 (RCN2), a protein localized in the lumen of endoplasmic reticulum. Monomer (beta chain): Snake venom phospholipase A2 homolog that is neither toxic nor enzymatically active. Does not bind calcium. In Oxyuranus scutellatus scutellatus (Australian taipan), this protein is Neutral phospholipase A2 homolog taipoxin beta chain 1.